The sequence spans 686 residues: Acyl-CoA synthetase short-chain family member 3, mitochondrial (686 aa).

Residues 1–29 constitute a mitochondrion transit peptide; it reads MKPSWLQCRKVTGAGGLGGSLPASSPARG. Residue 226–229 coordinates CoA; sequence EPGR. ATP is bound by residues 424-426 and 445-450; these read GER and DHWWQT. An N6-succinyllysine modification is found at Lys-517. Residue Lys-523 is modified to N6-acetyllysine. Residues Asp-538, Arg-553, and Arg-564 each coordinate ATP. Residue Arg-623 coordinates CoA.

It belongs to the ATP-dependent AMP-binding enzyme family.

The protein localises to the mitochondrion matrix. It catalyses the reaction acetate + ATP + CoA = acetyl-CoA + AMP + diphosphate. It carries out the reaction propanoate + ATP + CoA = propanoyl-CoA + AMP + diphosphate. The catalysed reaction is butanoate + ATP + CoA = butanoyl-CoA + AMP + diphosphate. In terms of biological role, catalyzes the synthesis of acetyl-CoA from short-chain fatty acids. Propionate is the preferred substrate but can also utilize acetate and butyrate with a much lower affinity. In Bos taurus (Bovine), this protein is Acyl-CoA synthetase short-chain family member 3, mitochondrial (ACSS3).